The primary structure comprises 82 residues: Endocuticle structural glycoprotein SgAbd-5 (82 aa).

A Pyrrolidone carboxylic acid modification is found at glutamine 1. In terms of domain architecture, Chitin-binding type R&amp;R spans 18–82 (LGQYNFAYRT…ENGYQPRVQS (65 aa)).

In terms of biological role, component of the soft endocuticle of desert locust. In Schistocerca gregaria (Desert locust), this protein is Endocuticle structural glycoprotein SgAbd-5.